The following is a 396-amino-acid chain: Subtilisin-like protease 5 (396 aa).

The signal sequence occupies residues 1-20 (MTGFFTILSFSLAALSVTNA). Residues 21–116 (AQILSVPKGA…VEPDAIISQH (96 aa)) constitute a propeptide that is removed on maturation. In terms of domain architecture, Inhibitor I9 spans 37-113 (YIVVMKDDTS…VAFVEPDAII (77 aa)). N63 carries N-linked (GlcNAc...) asparagine glycosylation. Residues 125-396 (PWGLSRLSNR…SRLLYNGSGR (272 aa)) enclose the Peptidase S8 domain. Active-site charge relay system residues include D156 and H187. 2 N-linked (GlcNAc...) asparagine glycosylation sites follow: N230 and N248. S342 (charge relay system) is an active-site residue. The span at 376–389 (PTIRNPGPDTTSRL) shows a compositional bias: polar residues. The segment at 376 to 396 (PTIRNPGPDTTSRLLYNGSGR) is disordered. Residue N392 is glycosylated (N-linked (GlcNAc...) asparagine).

Belongs to the peptidase S8 family.

It is found in the secreted. Secreted subtilisin-like serine protease with keratinolytic activity that contributes to pathogenicity. This is Subtilisin-like protease 5 (SUB5) from Trichophyton verrucosum (Cattle ringworm fungus).